We begin with the raw amino-acid sequence, 235 residues long: Chromosome partition protein MukE (235 aa).

The segment at 204 to 235 (QQEPSQSSLLDGFDADDTGHHDSELTMQEGEV) is disordered.

The protein belongs to the MukE family. Interacts, and probably forms a ternary complex, with MukF and MukB. The complex formation is stimulated by calcium or magnesium.

Its subcellular location is the cytoplasm. It localises to the nucleoid. Functionally, involved in chromosome condensation, segregation and cell cycle progression. May participate in facilitating chromosome segregation by condensation DNA from both sides of a centrally located replisome during cell division. Probably acts via its interaction with MukB and MukF. The chain is Chromosome partition protein MukE from Photobacterium profundum (strain SS9).